The sequence spans 1089 residues: Importin subunit beta-3 (1089 aa).

The residue at position 2 (serine 2) is an N-acetylserine. HEAT repeat units follow at residues 6–39 (EEVN…EEWI), 44–78 (IEYL…ALKA), 96–129 (KEVL…IAEC), 138–165 (PELL…ILTT), 175–207 (INSI…YFKQ), 216–252 (LGIL…LVEL), 260–295 (MFDQ…FSEN), 304–359 (QNYG…ALKL), 361–395 (GEYL…SSAA), 399–439 (ADVL…STDF), 441–481 (PFIQ…FSEF), 484–524 (KDIL…AEAA), 526–568 (NKFI…GFAV), 571–613 (EKFH…CRIL), 615–689 (DDFV…ATLL), 692–735 (QFAV…LLAA), 742–781 (ELVL…IKVM), 788–849 (EDQL…LKTT), 852–890 (HYLK…IQYG), 898–930 (KNAF…CAQY), 938–978 (VCIP…LYAY), 986–1017 (DTYT…QLIE), 1028–1063 (NISA…LLGF), and 1066–1089 (SSDA…KWFA). Threonine 830 is modified (phosphothreonine).

The protein belongs to the importin beta family. Importin beta-3 subfamily. In terms of assembly, interacts with Ran (GSP1); interacts specifically with the GTP-bound form of Ran (GTP-Ran), protecting it from GTP hydrolysis and nucleotide exchange. Interacts with RPL25; this interaction is dissociated by binding to Ran-GTP. Interacts with YAP1; this interaction is dissociated by binding to Ran-GTP. Interacts with NOP1; via its rg-NLS. Interacts with SOF1; via its cNLS. Interacts with histones H3 and H4; via their NLS. Interacts with ABF1.

Its subcellular location is the cytoplasm. It localises to the nucleus. In terms of biological role, functions in nuclear protein import as nuclear transport receptor. Serves as receptor for classical and arginine/glycine-rich nuclear localization signals (cNLS and rg-NLS) in cargo substrates. Its predominant cargo substrate seems to be ribosomal proteins and ribosome biogenesis trans- and cis-acting factors. Required for nuclear transport of YAP1, NOP1 and SOF1. Mediates the nuclear import of histones H3 and H4. Mediates docking of the importin/substrate complex to the nuclear pore complex (NPC) through binding to repeat-containing nucleoporins. The complex is subsequently translocated through the pore by an energy requiring, Ran-dependent mechanism. At the nucleoplasmic side of the NPC, GTP-Ran binding leads to release of the cargo. The importin is re-exported from the nucleus to the cytoplasm where GTP hydrolysis releases Ran from importin. The directionality of nuclear import is thought to be conferred by an asymmetric distribution of the GTP- and GDP-bound forms of Ran between the cytoplasm and nucleus. Functionally, plays a role in protein secretion. This chain is Importin subunit beta-3, found in Saccharomyces cerevisiae (strain ATCC 204508 / S288c) (Baker's yeast).